The following is a 274-amino-acid chain: Copper chaperone for superoxide dismutase (274 aa).

Positions 11-74 (VCALEFAVQM…LLESTGRQAV (64 aa)) constitute an HMA domain. Residues Cys-22 and Cys-25 each coordinate Cu cation. Lys-76 participates in a covalent cross-link: Glycyl lysine isopeptide (Lys-Gly) (interchain with G-Cter in ubiquitin). The superoxide dismutase-like stretch occupies residues 88-234 (AAVAILEGCG…LACGIIARSA (147 aa)). Cysteines 141 and 227 form a disulfide. Residues His-147, His-155, His-164, and Asp-167 each coordinate Zn(2+). Residues Lys-189, Lys-216, and Lys-241 each participate in a glycyl lysine isopeptide (Lys-Gly) (interchain with G-Cter in ubiquitin) cross-link. Cu cation is bound by residues Cys-244 and Cys-246. Ser-267 is modified (phosphoserine).

The protein in the C-terminal section; belongs to the Cu-Zn superoxide dismutase family. In terms of assembly, homodimer, and heterodimer with SOD1. Interacts with COMMD1. Interacts with XIAP/BIRC4. Interacts with SLC31A1(via C-terminal domain); this interaction is Cu(1+)-mediated. The heterodimer CCS:SOD1 interacts with SLC31A1; this heterotrimer is Cu(1+)-mediated and its maintenance is regulated through SOD1 activation. Cu(2+) serves as cofactor. It depends on Zn(2+) as a cofactor. Ubiquitinion by XIAP/BIRC4 leads to enhancement of its chaperone activity toward its physiologic target, SOD1, rather than proteasomal degradation. XIAP/BIRC4 preferentially ubiquitinates at Lys-241. In terms of tissue distribution, ubiquitous.

It localises to the cytoplasm. Functionally, delivers copper to copper zinc superoxide dismutase (SOD1). The polypeptide is Copper chaperone for superoxide dismutase (Mus musculus (Mouse)).